A 232-amino-acid chain; its full sequence is Octanoyltransferase (232 aa).

The 176-residue stretch at 44-219 folds into the BPL/LPL catalytic domain; the sequence is EHTGDELWVV…QLARQFGLVL (176 aa). Substrate contacts are provided by residues 83–90, 150–152, and 163–165; these read RGGQVTYH, ALG, and GLS. The Acyl-thioester intermediate role is filled by Cys181.

The protein belongs to the LipB family.

The protein resides in the cytoplasm. It catalyses the reaction octanoyl-[ACP] + L-lysyl-[protein] = N(6)-octanoyl-L-lysyl-[protein] + holo-[ACP] + H(+). Its pathway is protein modification; protein lipoylation via endogenous pathway; protein N(6)-(lipoyl)lysine from octanoyl-[acyl-carrier-protein]: step 1/2. Catalyzes the transfer of endogenously produced octanoic acid from octanoyl-acyl-carrier-protein onto the lipoyl domains of lipoate-dependent enzymes. Lipoyl-ACP can also act as a substrate although octanoyl-ACP is likely to be the physiological substrate. The sequence is that of Octanoyltransferase from Xanthomonas campestris pv. campestris (strain B100).